The following is a 786-amino-acid chain: Protein RDM16 (786 aa).

3 stretches are compositionally biased toward basic and acidic residues: residues 1-80 (MDKE…SRDR), 87-112 (RSHEGSKEKESRSKRKDREEENGARD), and 123-143 (NGERRSRFEDVAIEVENKDAQ). 4 disordered regions span residues 1–223 (MDKE…SANL), 255–283 (KKATKPTSEGSPHTRVPPSTTTPAVSTGT), 532–557 (RPIEPPAEAAPPPPQPLKLTKKEQKK), and 616–642 (EREQAHTDRNAARKLTPAEKREKKERK). Over residues 145–164 (SEGSGATNPTSGVTMGASTY) the composition is skewed to polar residues. A compositionally biased stretch (low complexity) spans 165–176 (SSIPSEASAAPS). The segment covering 177–189 (QTLLTKVSSISTT) has biased composition (polar residues). The segment covering 190–203 (DENKASVVRSHEVP) has biased composition (basic and acidic residues). Residues 268–283 (TRVPPSTTTPAVSTGT) show a composition bias toward low complexity. Positions 534–547 (IEPPAEAAPPPPQP) are enriched in pro residues.

It localises to the nucleus. The protein localises to the nucleoplasm. In terms of biological role, functions in the RNA-directed DNA methylation (RdDM) pathway. Acts as a pre-mRNA splicing factor, likely by affecting Pol V transcripts. Affects DNA methylation of transposable elements (TEs) and preferentially influences NRPD1- and ROS1-targeted loci. The protein is Protein RDM16 of Arabidopsis thaliana (Mouse-ear cress).